Here is a 167-residue protein sequence, read N- to C-terminus: Large ribosomal subunit protein bL9 (167 aa).

The protein belongs to the bacterial ribosomal protein bL9 family.

Functionally, binds to the 23S rRNA. The polypeptide is Large ribosomal subunit protein bL9 (Nitratidesulfovibrio vulgaris (strain ATCC 29579 / DSM 644 / CCUG 34227 / NCIMB 8303 / VKM B-1760 / Hildenborough) (Desulfovibrio vulgaris)).